The primary structure comprises 317 residues: MATH domain and coiled-coil domain-containing protein At3g58240 (317 aa).

Residues 6–131 (DNKFTWVIKN…DGEVEIVAQI (126 aa)) form the MATH domain. Positions 254 to 305 (KLDWLEKKLDEVKEIKKKCERVTEMEKELHDLMNKHTNVSKLLEKEKLEIKN) form a coiled coil.

The sequence is that of MATH domain and coiled-coil domain-containing protein At3g58240 from Arabidopsis thaliana (Mouse-ear cress).